We begin with the raw amino-acid sequence, 33 residues long: Brevinin-2DYb (33 aa).

The cysteines at positions 27 and 33 are disulfide-linked.

Expressed by the skin glands.

It localises to the secreted. Antimicrobial peptide. Active against the Gram-positive bacterium S.aureus (MIC=30 uM) and the Gram-negative bacterium E.coli (MIC=30 uM). This chain is Brevinin-2DYb, found in Rana dybowskii (Dybovsky's frog).